The chain runs to 155 residues: SsrA-binding protein (155 aa).

It belongs to the SmpB family.

Its subcellular location is the cytoplasm. Its function is as follows. Required for rescue of stalled ribosomes mediated by trans-translation. Binds to transfer-messenger RNA (tmRNA), required for stable association of tmRNA with ribosomes. tmRNA and SmpB together mimic tRNA shape, replacing the anticodon stem-loop with SmpB. tmRNA is encoded by the ssrA gene; the 2 termini fold to resemble tRNA(Ala) and it encodes a 'tag peptide', a short internal open reading frame. During trans-translation Ala-aminoacylated tmRNA acts like a tRNA, entering the A-site of stalled ribosomes, displacing the stalled mRNA. The ribosome then switches to translate the ORF on the tmRNA; the nascent peptide is terminated with the 'tag peptide' encoded by the tmRNA and targeted for degradation. The ribosome is freed to recommence translation, which seems to be the essential function of trans-translation. This chain is SsrA-binding protein, found in Lactococcus lactis subsp. cremoris (strain MG1363).